Consider the following 329-residue polypeptide: Malate dehydrogenase (329 aa).

Residue Gly-12–Gly-18 coordinates NAD(+). Substrate is bound by residues Arg-93 and Arg-99. NAD(+) contacts are provided by residues Asn-106, Gln-113, and Val-130–Asn-132. Substrate is bound by residues Asn-132 and Arg-163. His-188 functions as the Proton acceptor in the catalytic mechanism.

It belongs to the LDH/MDH superfamily. MDH type 2 family.

The catalysed reaction is (S)-malate + NAD(+) = oxaloacetate + NADH + H(+). Its function is as follows. Catalyzes the reversible oxidation of malate to oxaloacetate. The protein is Malate dehydrogenase of Streptomyces griseus subsp. griseus (strain JCM 4626 / CBS 651.72 / NBRC 13350 / KCC S-0626 / ISP 5235).